Consider the following 205-residue polypeptide: Iron-sulfur assembly protein 2 (205 aa).

Positions 131, 196, and 198 each coordinate Fe cation.

Belongs to the HesB/IscA family.

The protein localises to the mitochondrion matrix. In terms of biological role, involved in the assembly of mitochondrial and cytoplasmic iron-sulfur proteins. Probably involved in the binding of an intermediate of Fe/S cluster assembly. This chain is Iron-sulfur assembly protein 2 (isa2), found in Schizosaccharomyces pombe (strain 972 / ATCC 24843) (Fission yeast).